The chain runs to 366 residues: L-Ala-D/L-Glu epimerase (366 aa).

Residues Arg-24, Thr-135, and Lys-160 each contribute to the substrate site. Lys-162 functions as the Proton acceptor; specific for (R)-substrate epimerization in the catalytic mechanism. The Mg(2+) site is built by Asp-191, Glu-219, and Asp-244. The Proton acceptor; specific for (S)-substrate epimerization role is filled by Lys-268. Residues Ser-296, Ile-298, Asp-321, and Asp-323 each contribute to the substrate site.

Belongs to the mandelate racemase/muconate lactonizing enzyme family. In terms of assembly, homooctamer; tetramer of dimers. The cofactor is Mg(2+).

It catalyses the reaction L-alanyl-L-glutamate = L-alanyl-D-glutamate. The protein operates within cell wall degradation; peptidoglycan degradation. In terms of biological role, catalyzes the epimerization of L-Ala-D-Glu to L-Ala-L-Glu and has probably a role in the metabolism of the murein peptide, of which L-Ala-D-Glu is a component. Is also able to catalyze the reverse reaction and the epimerization of the other Ala-X dipeptides L-Ala-L-Asp, L-Ala-L-Leu, L-Ala-L-Met, and L-Ala-L-Ser. Is not able to epimerize other L-Ala-X dipeptides. Is also active with L-Ser-L-Glu and, oddly, L-Pro-L-Glu, but not with L-Glu-L-Glu, L-Lys-L-Glu, L-Lys-L-Ala, or D-Ala-D-Ala. The polypeptide is L-Ala-D/L-Glu epimerase (ykfB) (Bacillus subtilis (strain 168)).